The chain runs to 115 residues: SPbeta prophage-derived uncharacterized protein YoqS (115 aa).

The protein is SPbeta prophage-derived uncharacterized protein YoqS (yoqS) of Bacillus subtilis (strain 168).